Consider the following 295-residue polypeptide: Phosphatidylserine decarboxylase proenzyme (295 aa).

Residues Asp113, His169, and Ser256 each act as charge relay system; for autoendoproteolytic cleavage activity in the active site. Catalysis depends on Ser256, which acts as the Schiff-base intermediate with substrate; via pyruvic acid; for decarboxylase activity. Pyruvic acid (Ser); by autocatalysis is present on Ser256.

The protein belongs to the phosphatidylserine decarboxylase family. PSD-B subfamily. Prokaryotic type II sub-subfamily. As to quaternary structure, heterodimer of a large membrane-associated beta subunit and a small pyruvoyl-containing alpha subunit. Requires pyruvate as cofactor. Is synthesized initially as an inactive proenzyme. Formation of the active enzyme involves a self-maturation process in which the active site pyruvoyl group is generated from an internal serine residue via an autocatalytic post-translational modification. Two non-identical subunits are generated from the proenzyme in this reaction, and the pyruvate is formed at the N-terminus of the alpha chain, which is derived from the carboxyl end of the proenzyme. The autoendoproteolytic cleavage occurs by a canonical serine protease mechanism, in which the side chain hydroxyl group of the serine supplies its oxygen atom to form the C-terminus of the beta chain, while the remainder of the serine residue undergoes an oxidative deamination to produce ammonia and the pyruvoyl prosthetic group on the alpha chain. During this reaction, the Ser that is part of the protease active site of the proenzyme becomes the pyruvoyl prosthetic group, which constitutes an essential element of the active site of the mature decarboxylase.

The protein resides in the cell membrane. It catalyses the reaction a 1,2-diacyl-sn-glycero-3-phospho-L-serine + H(+) = a 1,2-diacyl-sn-glycero-3-phosphoethanolamine + CO2. It functions in the pathway phospholipid metabolism; phosphatidylethanolamine biosynthesis; phosphatidylethanolamine from CDP-diacylglycerol: step 2/2. Functionally, catalyzes the formation of phosphatidylethanolamine (PtdEtn) from phosphatidylserine (PtdSer). This is Phosphatidylserine decarboxylase proenzyme from Clostridium botulinum (strain Langeland / NCTC 10281 / Type F).